Consider the following 179-residue polypeptide: Large ribosomal subunit protein uL5 (179 aa).

Belongs to the universal ribosomal protein uL5 family. As to quaternary structure, part of the 50S ribosomal subunit; part of the 5S rRNA/L5/L18/L25 subcomplex. Contacts the 5S rRNA and the P site tRNA. Forms a bridge to the 30S subunit in the 70S ribosome.

Its function is as follows. This is one of the proteins that bind and probably mediate the attachment of the 5S RNA into the large ribosomal subunit, where it forms part of the central protuberance. In the 70S ribosome it contacts protein S13 of the 30S subunit (bridge B1b), connecting the 2 subunits; this bridge is implicated in subunit movement. Contacts the P site tRNA; the 5S rRNA and some of its associated proteins might help stabilize positioning of ribosome-bound tRNAs. This Macrococcus caseolyticus (strain JCSC5402) (Macrococcoides caseolyticum) protein is Large ribosomal subunit protein uL5.